The following is a 338-amino-acid chain: Tetraacyldisaccharide 4'-kinase (338 aa).

53–60 lines the ATP pocket; that stretch reads TVGGSGKT.

The protein belongs to the LpxK family.

The catalysed reaction is a lipid A disaccharide + ATP = a lipid IVA + ADP + H(+). Its pathway is glycolipid biosynthesis; lipid IV(A) biosynthesis; lipid IV(A) from (3R)-3-hydroxytetradecanoyl-[acyl-carrier-protein] and UDP-N-acetyl-alpha-D-glucosamine: step 6/6. In terms of biological role, transfers the gamma-phosphate of ATP to the 4'-position of a tetraacyldisaccharide 1-phosphate intermediate (termed DS-1-P) to form tetraacyldisaccharide 1,4'-bis-phosphate (lipid IVA). The sequence is that of Tetraacyldisaccharide 4'-kinase from Azorhizobium caulinodans (strain ATCC 43989 / DSM 5975 / JCM 20966 / LMG 6465 / NBRC 14845 / NCIMB 13405 / ORS 571).